A 128-amino-acid chain; its full sequence is uncharacterized protein (128 aa).

3 helical membrane passes run 30 to 50, 65 to 85, and 93 to 113; these read ILFT…LGSS, VFRG…LGIQ, and WEVA…PDIV.

Its subcellular location is the cell membrane. This is an uncharacterized protein from Rickettsia prowazekii (strain Madrid E).